The following is a 179-amino-acid chain: Probable WRKY transcription factor 24 (179 aa).

A DNA-binding region (WRKY) is located at residues 92–157 (SDDDVLDDGY…YEGVHNHPCE (66 aa)).

This sequence belongs to the WRKY group II-c family.

The protein localises to the nucleus. Transcription factor. Interacts specifically with the W box (5'-(T)TGAC[CT]-3'), a frequently occurring elicitor-responsive cis-acting element. The chain is Probable WRKY transcription factor 24 (WRKY24) from Arabidopsis thaliana (Mouse-ear cress).